The following is a 274-amino-acid chain: Methionine aminopeptidase B (274 aa).

Histidine 102 is a binding site for substrate. Positions 120, 131, and 194 each coordinate a divalent metal cation. Histidine 201 contacts substrate. Positions 227 and 258 each coordinate a divalent metal cation.

It belongs to the peptidase M24A family. Methionine aminopeptidase type 1 subfamily. Monomer. Co(2+) serves as cofactor. The cofactor is Zn(2+). Requires Mn(2+) as cofactor. It depends on Fe(2+) as a cofactor.

It carries out the reaction Release of N-terminal amino acids, preferentially methionine, from peptides and arylamides.. Its function is as follows. Removes the N-terminal methionine from nascent proteins. The N-terminal methionine is often cleaved when the second residue in the primary sequence is small and uncharged (Met-Ala-, Cys, Gly, Pro, Ser, Thr, or Val). Requires deformylation of the N(alpha)-formylated initiator methionine before it can be hydrolyzed. This is Methionine aminopeptidase B from Synechocystis sp. (strain ATCC 27184 / PCC 6803 / Kazusa).